The following is a 265-amino-acid chain: Undecaprenyl-diphosphatase 1 (265 aa).

The next 7 membrane-spanning stretches (helical) occupy residues 4–24 (IIIA…PISS), 42–62 (AKTF…ILYH), 84–104 (FHVF…HDVI), 108–128 (LFQP…MIFA), 184–204 (SEFS…LDLL), 217–237 (MFAV…VTFL), and 245–265 (LKPF…FVLL).

Belongs to the UppP family.

It is found in the cell membrane. The enzyme catalyses di-trans,octa-cis-undecaprenyl diphosphate + H2O = di-trans,octa-cis-undecaprenyl phosphate + phosphate + H(+). Its function is as follows. Catalyzes the dephosphorylation of undecaprenyl diphosphate (UPP). Confers resistance to bacitracin. The protein is Undecaprenyl-diphosphatase 1 of Bacillus thuringiensis (strain Al Hakam).